A 337-amino-acid polypeptide reads, in one-letter code: Regulator of RpoS (337 aa).

Positions 9-123 (QILIVEDEQV…NRLREMVFAC (115 aa)) constitute a Response regulatory domain. A 4-aspartylphosphate modification is found at Asp-58.

It belongs to the RssB family. Binds to RpoS. In terms of processing, phosphorylated. Phosphorylation stimulates the interaction with RpoS and, therefore, the proteolysis of RpoS.

Functionally, regulates the turnover of the sigma S factor (RpoS) by promoting its proteolysis in exponentially growing cells. Acts by binding and delivering RpoS to the ClpXP protease. RssB is not co-degraded with RpoS, but is released from the complex and can initiate a new cycle of RpoS recognition and degradation. The chain is Regulator of RpoS from Shigella flexneri.